The chain runs to 129 residues: UPF0325 protein Ent638_0703 (129 aa).

Belongs to the UPF0325 family.

The sequence is that of UPF0325 protein Ent638_0703 from Enterobacter sp. (strain 638).